The chain runs to 364 residues: tRNA 2-selenouridine synthase (364 aa).

Positions 14–137 (LIADTPIIDV…LRQTAIQATI (124 aa)) constitute a Rhodanese domain. The active-site S-selanylcysteine intermediate is the Cys-97.

The protein belongs to the SelU family. Monomer.

It carries out the reaction 5-methylaminomethyl-2-thiouridine(34) in tRNA + selenophosphate + (2E)-geranyl diphosphate + H2O + H(+) = 5-methylaminomethyl-2-selenouridine(34) in tRNA + (2E)-thiogeraniol + phosphate + diphosphate. The enzyme catalyses 5-methylaminomethyl-2-thiouridine(34) in tRNA + (2E)-geranyl diphosphate = 5-methylaminomethyl-S-(2E)-geranyl-thiouridine(34) in tRNA + diphosphate. The catalysed reaction is 5-methylaminomethyl-S-(2E)-geranyl-thiouridine(34) in tRNA + selenophosphate + H(+) = 5-methylaminomethyl-2-(Se-phospho)selenouridine(34) in tRNA + (2E)-thiogeraniol. It catalyses the reaction 5-methylaminomethyl-2-(Se-phospho)selenouridine(34) in tRNA + H2O = 5-methylaminomethyl-2-selenouridine(34) in tRNA + phosphate. Its function is as follows. Involved in the post-transcriptional modification of the uridine at the wobble position (U34) of tRNA(Lys), tRNA(Glu) and tRNA(Gln). Catalyzes the conversion of 2-thiouridine (S2U-RNA) to 2-selenouridine (Se2U-RNA). Acts in a two-step process involving geranylation of 2-thiouridine (S2U) to S-geranyl-2-thiouridine (geS2U) and subsequent selenation of the latter derivative to 2-selenouridine (Se2U) in the tRNA chain. The chain is tRNA 2-selenouridine synthase from Escherichia fergusonii (strain ATCC 35469 / DSM 13698 / CCUG 18766 / IAM 14443 / JCM 21226 / LMG 7866 / NBRC 102419 / NCTC 12128 / CDC 0568-73).